A 410-amino-acid chain; its full sequence is Subtilisin-like protease CPC735_003880 (410 aa).

Residues 1-17 (MKLLKSSLLLLLPFVTA) form the signal peptide. The propeptide occupies 18–118 (NPIPSEDKDI…VTPDRKVYLA (101 aa)). In terms of domain architecture, Inhibitor I9 spans 31 to 118 (RYIVTLKDGI…VTPDRKVYLA (88 aa)). The Peptidase S8 domain occupies 127 to 410 (GYNLGHMSSK…IQEMNETVIA (284 aa)). Residue aspartate 159 is the Charge relay system of the active site. A glycan (N-linked (GlcNAc...) asparagine) is linked at asparagine 182. Catalysis depends on histidine 191, which acts as the Charge relay system. N-linked (GlcNAc...) asparagine glycans are attached at residues asparagine 238, asparagine 251, and asparagine 338. The Charge relay system role is filled by serine 347. An N-linked (GlcNAc...) asparagine glycan is attached at asparagine 405.

The protein belongs to the peptidase S8 family.

It is found in the secreted. Its function is as follows. Secreted subtilisin-like serine protease with keratinolytic activity that contributes to pathogenicity. This Coccidioides posadasii (strain C735) (Valley fever fungus) protein is Subtilisin-like protease CPC735_003880.